Consider the following 655-residue polypeptide: Probable replication restart protein PriA (655 aa).

Cysteine 368, cysteine 371, cysteine 377, cysteine 380, cysteine 396, cysteine 399, cysteine 408, and cysteine 411 together coordinate Zn(2+).

It belongs to the helicase family. PriA subfamily. As to quaternary structure, component of the replication restart primosome. Zn(2+) serves as cofactor.

Its function is as follows. Initiates the restart of stalled replication forks, which reloads the replicative helicase on sites other than the origin of replication. Recognizes and binds to abandoned replication forks and remodels them to uncover a helicase loading site. Promotes assembly of the primosome at these replication forks. The sequence is that of Probable replication restart protein PriA from Mycobacterium bovis (strain ATCC BAA-935 / AF2122/97).